The following is a 34-amino-acid chain: MSDIN-like toxin proprotein 2 (34 aa).

A propeptide spanning residues 1–10 (MSDINTARLP) is cleaved from the precursor. Positions 11–20 (FYQFPDFKYP) form a cross-link, cyclopeptide (Phe-Pro). The propeptide occupies 21 to 34 (CVGDDIEMVLARGE).

Belongs to the MSDIN fungal toxin family. Post-translationally, processed by the macrocyclase-peptidase enzyme POPB to yield a toxic cyclic decapeptide. POPB first removes 10 residues from the N-terminus. Conformational trapping of the remaining peptide forces the enzyme to release this intermediate rather than proceed to macrocyclization. The enzyme rebinds the remaining peptide in a different conformation and catalyzes macrocyclization of the N-terminal 10 residues.

Its function is as follows. Probable toxin that belongs to the MSDIN-like toxin family responsible for a large number of food poisoning cases and deaths. This Amanita bisporigera (Destroying angel) protein is MSDIN-like toxin proprotein 2.